The primary structure comprises 57 residues: Large ribosomal subunit protein bL32 (57 aa).

The span at 1–20 (MAVPKRRMSRSNTRSRRAQW) shows a compositional bias: basic residues. Residues 1–22 (MAVPKRRMSRSNTRSRRAQWKA) are disordered.

Belongs to the bacterial ribosomal protein bL32 family.

This Mycobacterium sp. (strain JLS) protein is Large ribosomal subunit protein bL32.